A 222-amino-acid polypeptide reads, in one-letter code: Vesicle transport v-SNARE 12 (222 aa).

Residue Ser-2 is modified to N-acetylserine. At 2 to 199 the chain is on the cytoplasmic side; the sequence is SDVFEGYERQ…MSRRMTRNKW (198 aa). The stretch at 68–95 forms a coiled coil; it reads KAVCLSKLREYKSDLNQLKKEFKRVSSA. A helical; Anchor for type IV membrane protein membrane pass occupies residues 200 to 220; that stretch reads IITSVIVALVLAIILIISYKL. Residues 221-222 lie on the Vesicular side of the membrane; sequence SH.

It belongs to the VTI1 family. In terms of assembly, forms SNARE complexes with the t-SNAREs SYP61 and either SYP41 or SYP42, and with a much lower affinity with SYP51 in the TGN. Also interacts with VPS45, a Sec1 protein, but not with SYP21 or SYP22. Binds to EPSIN2. Core constituent of the SNARE complex required for membrane fusion at the trans-Golgi network. Interacts with SCYL2B. Expressed in roots, stems, flowers and leaves.

It is found in the golgi apparatus. The protein localises to the trans-Golgi network membrane. The protein resides in the prevacuolar compartment membrane. Its subcellular location is the cell membrane. Functionally, together with either SYP41 or SYP61, required for membrane fusion; the fusion of phospholipid vesicles containing SYP41 or SYP61 and VTI12 is triggered by YKT61 and YKT62. Functions as a v-SNARE responsible for the docking or fusion of transport vesicles within the trans-Golgi network (TGN) and mediates liposome fusion. Necessary to deliver proteins to the protein storage vacuole (PSV). May be also involved in retrograde traffic to the cis-Golgi. The sequence is that of Vesicle transport v-SNARE 12 from Arabidopsis thaliana (Mouse-ear cress).